A 453-amino-acid chain; its full sequence is Tubulin beta-1 chain (453 aa).

GTP is bound by residues glutamine 12, glutamate 71, serine 140, glycine 144, threonine 145, glycine 146, asparagine 206, and asparagine 228. Glutamate 71 contacts Mg(2+). Residues 431 to 453 (TADGVEGYEEEGYENDHPEDDEE) are disordered. The segment covering 436 to 453 (EGYEEEGYENDHPEDDEE) has biased composition (acidic residues).

Belongs to the tubulin family. As to quaternary structure, dimer of alpha and beta chains. A typical microtubule is a hollow water-filled tube with an outer diameter of 25 nm and an inner diameter of 15 nM. Alpha-beta heterodimers associate head-to-tail to form protofilaments running lengthwise along the microtubule wall with the beta-tubulin subunit facing the microtubule plus end conferring a structural polarity. Microtubules usually have 13 protofilaments but different protofilament numbers can be found in some organisms and specialized cells. Mg(2+) is required as a cofactor.

Its subcellular location is the cytoplasm. It localises to the cytoskeleton. Functionally, tubulin is the major constituent of microtubules, a cylinder consisting of laterally associated linear protofilaments composed of alpha- and beta-tubulin heterodimers. Microtubules grow by the addition of GTP-tubulin dimers to the microtubule end, where a stabilizing cap forms. Below the cap, tubulin dimers are in GDP-bound state, owing to GTPase activity of alpha-tubulin. The chain is Tubulin beta-1 chain (TUBB) from Chondrus crispus (Carrageen Irish moss).